A 358-amino-acid polypeptide reads, in one-letter code: Acyl-CoA desaturase 1 (358 aa).

The Cytoplasmic segment spans residues 1–71 (MPAHMLQEIS…EGPPPKLEYV (71 aa)). Over residues 8–24 (EISSSYTTTTTITEPPS) the composition is skewed to low complexity. A disordered region spans residues 8–33 (EISSSYTTTTTITEPPSGNLQNGREK). Residues 72-92 (WRNIILMALLHVGALYGITLI) traverse the membrane as a helical segment. Residue Asn74 participates in substrate binding. Over 93-96 (PSSK) the chain is Lumenal. Residues 97-117 (VYTLLWGIFYYLISALGITAG) traverse the membrane as a helical segment. At 118–216 (AHRLWSHRTY…EKLVMFQRRY (99 aa)) the chain is on the cytoplasmic side. Fe cation contacts are provided by His119 and His124. The short motif at 119–124 (HRLWSH) is the Histidine box-1 element. Substrate is bound by residues Asn147, Arg154, and Asp155. His156, His159, and His160 together coordinate Fe cation. The Histidine box-2 motif lies at 156–160 (HRAHH). Substrate-binding residues include Arg187 and Lys188. A helical membrane pass occupies residues 217 to 236 (YKPGLLLMCFILPTLVPWYC). Over 237 to 240 (WGET) the chain is Lumenal. The helical transmembrane segment at 241–262 (FLHSLFVSTFLRYTLVLNATWL) threads the bilayer. Trp261 is a substrate binding site. Residues 263-358 (VNSAAHLYGY…RTGDGSHKSS (96 aa)) are Cytoplasmic-facing. The Fe cation site is built by His268, His297, His300, and His301. The Histidine box-3 motif lies at 297 to 301 (HNYHH).

This sequence belongs to the fatty acid desaturase type 1 family. Requires Fe(2+) as cofactor. Detected in liver (at protein level). Detected in adipose tissue. Detected in liver when rats are kept on a fat-free diet, but not when their food contains unsaturated fatty acids.

Its subcellular location is the endoplasmic reticulum membrane. The protein resides in the membrane. The catalysed reaction is octadecanoyl-CoA + 2 Fe(II)-[cytochrome b5] + O2 + 2 H(+) = (9Z)-octadecenoyl-CoA + 2 Fe(III)-[cytochrome b5] + 2 H2O. Stearoyl-CoA desaturase that utilizes O(2) and electrons from reduced cytochrome b5 to introduce the first double bond into saturated fatty acyl-CoA substrates. Catalyzes the insertion of a cis double bond at the Delta-9 position into fatty acyl-CoA substrates including palmitoyl-CoA and stearoyl-CoA. Gives rise to a mixture of 16:1 and 18:1 unsaturated fatty acids. Plays an important role in lipid biosynthesis. Plays an important role in regulating the expression of genes that are involved in lipogenesis and in regulating mitochondrial fatty acid oxidation. Plays an important role in body energy homeostasis. Contributes to the biosynthesis of membrane phospholipids, cholesterol esters and triglycerides. Required for normal development of sebaceous glands. Required for the biosynthesis of normal levels of Delta-9 unsaturated fatty acids and 1-alkyl-2,3-diacylglycerol in the Harderian gland. Required for normal production of meibum, an oily material that prevents drying of the cornea. This Rattus norvegicus (Rat) protein is Acyl-CoA desaturase 1 (Scd1).